The sequence spans 347 residues: NADH-quinone oxidoreductase subunit H (347 aa).

9 consecutive transmembrane segments (helical) span residues 13 to 33 (IIMI…IAYV), 50 to 70 (PNVV…KFVF), 82 to 102 (AVFL…WAVV), 115 to 135 (VGIL…IMGG), 161 to 181 (IGFV…TDIV), 198 to 218 (FLDW…ISAL), 263 to 283 (CALT…IWIL), 286 to 306 (VPGI…FAMV), and 321 to 341 (LGWK…AFVL).

Belongs to the complex I subunit 1 family. As to quaternary structure, NDH-1 is composed of 14 different subunits. Subunits NuoA, H, J, K, L, M, N constitute the membrane sector of the complex.

The protein resides in the cell inner membrane. The enzyme catalyses a quinone + NADH + 5 H(+)(in) = a quinol + NAD(+) + 4 H(+)(out). Functionally, NDH-1 shuttles electrons from NADH, via FMN and iron-sulfur (Fe-S) centers, to quinones in the respiratory chain. The immediate electron acceptor for the enzyme in this species is believed to be ubiquinone. Couples the redox reaction to proton translocation (for every two electrons transferred, four hydrogen ions are translocated across the cytoplasmic membrane), and thus conserves the redox energy in a proton gradient. This subunit may bind ubiquinone. The polypeptide is NADH-quinone oxidoreductase subunit H (Rhizobium johnstonii (strain DSM 114642 / LMG 32736 / 3841) (Rhizobium leguminosarum bv. viciae)).